The sequence spans 165 residues: Chorismate pyruvate-lyase (165 aa).

Arginine 77, leucine 115, and glutamate 156 together coordinate substrate.

This sequence belongs to the UbiC family. As to quaternary structure, monomer.

The protein localises to the cytoplasm. The catalysed reaction is chorismate = 4-hydroxybenzoate + pyruvate. The protein operates within cofactor biosynthesis; ubiquinone biosynthesis. Removes the pyruvyl group from chorismate, with concomitant aromatization of the ring, to provide 4-hydroxybenzoate (4HB) for the ubiquinone pathway. The chain is Chorismate pyruvate-lyase from Salmonella typhi.